The sequence spans 422 residues: Proline--tRNA ligase (422 aa).

Belongs to the class-II aminoacyl-tRNA synthetase family. ProS type 2 subfamily. Homodimer.

The protein localises to the cytoplasm. It catalyses the reaction tRNA(Pro) + L-proline + ATP = L-prolyl-tRNA(Pro) + AMP + diphosphate. In terms of biological role, catalyzes the attachment of proline to tRNA(Pro) in a two-step reaction: proline is first activated by ATP to form Pro-AMP and then transferred to the acceptor end of tRNA(Pro). This is Proline--tRNA ligase from Wolbachia pipientis wMel.